A 935-amino-acid chain; its full sequence is C-1-tetrahydrofolate synthase, cytoplasmic (935 aa).

Residue Met1 is modified to N-acetylmethionine. The methylenetetrahydrofolate dehydrogenase and methenyltetrahydrofolate cyclohydrolase (D/C) domain stretch occupies residues 2–291 (APAGILNGKL…MLMQSTVESA (290 aa)). Substrate-binding positions include 52 to 56 (YINVK) and 99 to 101 (VQL). Lys56 is a catalytic residue. NADP(+)-binding positions include 172 to 174 (GRS) and Ser197. 272 to 276 (PGGVG) is a binding site for substrate. Positions 310–935 (LNLKTPVPSD…PETEQVNGLF (626 aa)) are formyltetrahydrofolate synthetase domain. Phosphoserine is present on Ser318. 380-387 (TPLGEGKS) contacts ATP. Residues Ser413 and Ser490 each carry the phosphoserine modification.

It in the N-terminal section; belongs to the tetrahydrofolate dehydrogenase/cyclohydrolase family. In the C-terminal section; belongs to the formate--tetrahydrofolate ligase family. In terms of assembly, homodimer.

The protein localises to the cytoplasm. The enzyme catalyses (6R)-5,10-methylene-5,6,7,8-tetrahydrofolate + NADP(+) = (6R)-5,10-methenyltetrahydrofolate + NADPH. The catalysed reaction is (6R)-5,10-methenyltetrahydrofolate + H2O = (6R)-10-formyltetrahydrofolate + H(+). It catalyses the reaction (6S)-5,6,7,8-tetrahydrofolate + formate + ATP = (6R)-10-formyltetrahydrofolate + ADP + phosphate. It participates in one-carbon metabolism; tetrahydrofolate interconversion. Its function is as follows. Trifunctional enzyme that catalyzes the interconversion of three forms of one-carbon-substituted tetrahydrofolate: (6R)-5,10-methylene-5,6,7,8-tetrahydrofolate, 5,10-methenyltetrahydrofolate and (6S)-10-formyltetrahydrofolate. These derivatives of tetrahydrofolate are differentially required in nucleotide and amino acid biosynthesis, (6S)-10-formyltetrahydrofolate being required for purine biosynthesis while (6R)-5,10-methylene-5,6,7,8-tetrahydrofolate is used for serine and methionine biosynthesis for instance. This Mus musculus (Mouse) protein is C-1-tetrahydrofolate synthase, cytoplasmic (Mthfd1).